A 307-amino-acid chain; its full sequence is Ribonuclease Z (307 aa).

The Zn(2+) site is built by histidine 63, histidine 65, aspartate 67, histidine 68, histidine 141, aspartate 212, and histidine 270. Aspartate 67 functions as the Proton acceptor in the catalytic mechanism.

The protein belongs to the RNase Z family. Homodimer. The cofactor is Zn(2+).

The enzyme catalyses Endonucleolytic cleavage of RNA, removing extra 3' nucleotides from tRNA precursor, generating 3' termini of tRNAs. A 3'-hydroxy group is left at the tRNA terminus and a 5'-phosphoryl group is left at the trailer molecule.. Functionally, zinc phosphodiesterase, which displays some tRNA 3'-processing endonuclease activity. Probably involved in tRNA maturation, by removing a 3'-trailer from precursor tRNA. In Bacillus mycoides (strain KBAB4) (Bacillus weihenstephanensis), this protein is Ribonuclease Z.